The primary structure comprises 471 residues: 5-hydroxytryptamine receptor 2A (471 aa).

Residues Met1–Leu80 lie on the Extracellular side of the membrane. 5 N-linked (GlcNAc...) asparagine glycosylation sites follow: Asn8, Asn38, Asn44, Asn51, and Asn54. A helical transmembrane segment spans residues Thr81–Met97. The Cytoplasmic segment spans residues Ala98–Tyr111. A helical membrane pass occupies residues Phe112–Tyr137. At Gly138 to Lys146 the chain is on the extracellular side. The helical transmembrane segment at Leu147–Leu171 threads the bilayer. An intrachain disulfide couples Cys148 to Cys227. Asp155 provides a ligand contact to serotonin. The DRY motif; important for ligand-induced conformation changes signature appears at Asp172–Tyr174. Residues Asp172–Lys191 lie on the Cytoplasmic side of the membrane. Residues Ala192–Leu215 traverse the membrane as a helical segment. Residues Gln216–Asp232 are Extracellular-facing. Residues Asn233–Ile258 form a helical membrane-spanning segment. Residues Lys259–Cys322 are Cytoplasmic-facing. A Phosphoserine modification is found at Ser280. A helical membrane pass occupies residues Lys323–Ile348. Asn343 contacts serotonin. The cysteines at positions 349 and 353 are disulfide-linked. The Extracellular segment spans residues Cys349–Asn356. The helical transmembrane segment at Val357–Leu382 threads the bilayer. An NPxxY motif; important for ligand-induced conformation changes and signaling motif is present at residues Asn376 to Tyr380. Over Phe383–Val471 the chain is Cytoplasmic. Residues Ser469–Val471 carry the PDZ-binding motif.

The protein belongs to the G-protein coupled receptor 1 family. Interacts (via C-terminus) with MPDZ and PATJ. May interact (via C-terminus) with MPP3, PRDX6, DLG4, DLG1, CASK, APBA1 and MAGI2. Interacts with GRM2 and DRD2; this may affect signaling. In terms of tissue distribution, detected in neurons in brain cortex. Detected in adult intestine, especially in mucosal epithelium, longitudinal and circular layers of muscularis externa and myenteric plexuses. Highly expressed in Paneth cells, and detected at lower levels in enterocytes (at protein level). Detected in neurons in the brain cortex.

It is found in the cell membrane. It localises to the cell projection. The protein resides in the dendrite. The protein localises to the axon. Its subcellular location is the cytoplasmic vesicle. It is found in the membrane. It localises to the caveola. The protein resides in the presynapse. G-protein coupled receptor activity is regulated by lipids: oleamide increases HTR2A-mediated activity. Its function is as follows. G-protein coupled receptor for 5-hydroxytryptamine (serotonin). Also functions as a receptor for various drugs and psychoactive substances, including mescaline, psilocybin, 1-(2,5-dimethoxy-4-iodophenyl)-2-aminopropane (DOI) and lysergic acid diethylamide (LSD). Ligand binding causes a conformation change that triggers signaling via guanine nucleotide-binding proteins (G proteins) and modulates the activity of downstream effectors. HTR2A is coupled to G(q)/G(11) G alpha proteins and activates phospholipase C-beta, releasing diacylglycerol (DAG) and inositol 1,4,5-trisphosphate (IP3) second messengers that modulate the activity of phosphatidylinositol 3-kinase and promote the release of Ca(2+) ions from intracellular stores, respectively. Beta-arrestin family members inhibit signaling via G proteins and mediate activation of alternative signaling pathways. Affects neural activity, perception, cognition and mood. Plays a role in the regulation of behavior, including responses to anxiogenic situations and psychoactive substances. Plays a role in intestinal smooth muscle contraction, and may play a role in arterial vasoconstriction. This Mus musculus (Mouse) protein is 5-hydroxytryptamine receptor 2A (Htr2a).